Consider the following 45-residue polypeptide: Iota-conotoxin-like R11.13 (45 aa).

Disulfide bonds link Cys-5-Cys-19, Cys-12-Cys-22, Cys-18-Cys-27, and Cys-21-Cys-36. Leu-43 carries the post-translational modification D-leucine. Position 45 (Arg-45) is a propeptide, removed by a carboxypeptidase.

The protein belongs to the conotoxin I1 superfamily. Expressed by the venom duct.

The protein resides in the secreted. In terms of biological role, iota-conotoxins bind to voltage-gated sodium channels (Nav) and act as agonists by shifting the voltage-dependence of activation to more hyperpolarized levels. Produces general excitatory symptoms. The sequence is that of Iota-conotoxin-like R11.13 from Conus radiatus (Rayed cone).